We begin with the raw amino-acid sequence, 274 residues long: Proteasome subunit beta (274 aa).

The propeptide at 1–52 is removed in mature form; by autocatalysis; that stretch reads MADPLGAAGRLPAVFMTPGTSSFADFLSRSAPHLLPGARSGLPGPVTEVAHG. Residue Thr-53 is the Nucleophile of the active site.

The protein belongs to the peptidase T1B family. The 20S proteasome core is composed of 14 alpha and 14 beta subunits that assemble into four stacked heptameric rings, resulting in a barrel-shaped structure. The two inner rings, each composed of seven catalytic beta subunits, are sandwiched by two outer rings, each composed of seven alpha subunits. The catalytic chamber with the active sites is on the inside of the barrel. Has a gated structure, the ends of the cylinder being occluded by the N-termini of the alpha-subunits. Is capped by the proteasome-associated ATPase, ARC.

The protein resides in the cytoplasm. The catalysed reaction is Cleavage of peptide bonds with very broad specificity.. The protein operates within protein degradation; proteasomal Pup-dependent pathway. With respect to regulation, the formation of the proteasomal ATPase ARC-20S proteasome complex, likely via the docking of the C-termini of ARC into the intersubunit pockets in the alpha-rings, may trigger opening of the gate for substrate entry. Interconversion between the open-gate and close-gate conformations leads to a dynamic regulation of the 20S proteasome proteolysis activity. In terms of biological role, component of the proteasome core, a large protease complex with broad specificity involved in protein degradation. The sequence is that of Proteasome subunit beta from Frankia casuarinae (strain DSM 45818 / CECT 9043 / HFP020203 / CcI3).